Here is a 378-residue protein sequence, read N- to C-terminus: 1-acyl-sn-glycerol-3-phosphate acyltransferase delta (378 aa).

A helical membrane pass occupies residues 11–31 (FLCHLVFCYVFIASGLIVNAI). The HXXXXD motif signature appears at 96–101 (HKFEID). The next 3 membrane-spanning stretches (helical) occupy residues 125 to 145 (ELAY…IFCT), 311 to 331 (WLFW…SMVS), and 338 to 358 (LASL…MIGV).

Belongs to the 1-acyl-sn-glycerol-3-phosphate acyltransferase family. In terms of tissue distribution, expressed at a high levels in the brain, at intermediate or low levels in skeletal muscles, gut, kidney, spleen and lung. Barely detectable in heart and liver.

It localises to the endoplasmic reticulum membrane. The catalysed reaction is a 1-acyl-sn-glycero-3-phosphate + an acyl-CoA = a 1,2-diacyl-sn-glycero-3-phosphate + CoA. It carries out the reaction (4Z,7Z,10Z,13Z,16Z,19Z)-docosahexaenoyl-CoA + 1-hexadecanoyl-sn-glycero-3-phosphate = 1-hexadecanoyl-2-(4Z,7Z,10Z,13Z,16Z,19Z-docosahexaenoyl)-sn-glycero-3-phosphate + CoA. It catalyses the reaction 1-octadecanoyl-sn-glycero-3-phosphate + (9Z,12Z)-octadecadienoyl-CoA = 1-octadecanoyl-2-(9Z,12Z-octadecadienoyl)-sn-glycero-3-phosphate + CoA. The enzyme catalyses 1-octadecanoyl-sn-glycero-3-phosphate + (4Z,7Z,10Z,13Z,16Z,19Z)-docosahexaenoyl-CoA = 1-octadecanoyl-2-(4Z,7Z,10Z,13Z,16Z,19Z-docosahexaenoyl)-sn-glycero-3-phosphate + CoA. The catalysed reaction is (4Z,7Z,10Z,13Z,16Z,19Z)-docosahexaenoyl-CoA + 1-(9Z-octadecenoyl)-sn-glycero-3-phosphate = 1-(9Z-octadecenoyl)-2-(4Z,7Z,10Z,13Z,16Z,19Z-docosahexaenoyl)-sn-glycero-3-phosphate + CoA. It functions in the pathway phospholipid metabolism; CDP-diacylglycerol biosynthesis; CDP-diacylglycerol from sn-glycerol 3-phosphate: step 2/3. Its function is as follows. Converts 1-acyl-sn-glycerol-3-phosphate (lysophosphatidic acid or LPA) into 1,2-diacyl-sn-glycerol-3-phosphate (phosphatidic acid or PA) by incorporating an acyl moiety at the sn-2 position of the glycerol backbone. Exhibits high acyl-CoA specificity for polyunsaturated fatty acyl-CoA, especially docosahexaenoyl-CoA (22:6-CoA, DHA-CoA). This is 1-acyl-sn-glycerol-3-phosphate acyltransferase delta (Agpat4) from Mus musculus (Mouse).